A 595-amino-acid polypeptide reads, in one-letter code: DNA mismatch repair protein MutL (595 aa).

Belongs to the DNA mismatch repair MutL/HexB family.

Its function is as follows. This protein is involved in the repair of mismatches in DNA. It is required for dam-dependent methyl-directed DNA mismatch repair. May act as a 'molecular matchmaker', a protein that promotes the formation of a stable complex between two or more DNA-binding proteins in an ATP-dependent manner without itself being part of a final effector complex. This is DNA mismatch repair protein MutL from Rhodopseudomonas palustris (strain TIE-1).